The primary structure comprises 98 residues: C-X-C motif chemokine 10 (98 aa).

Residues M1–G21 form the signal peptide. Residue R26 is modified to Citrulline. 2 disulfides stabilise this stretch: C30/C57 and C32/C74.

Belongs to the intercrine alpha (chemokine CxC) family. Monomer, dimer, and tetramer. Interacts with CXCR3 (via N-terminus).

The protein localises to the secreted. Pro-inflammatory cytokine that is involved in a wide variety of processes such as chemotaxis, differentiation, and activation of peripheral immune cells, regulation of cell growth, apoptosis and modulation of angiostatic effects. Plays thereby an important role during viral infections by stimulating the activation and migration of immune cells to the infected sites. Mechanistically, binding of CXCL10 to the CXCR3 receptor activates G protein-mediated signaling and results in downstream activation of phospholipase C-dependent pathway, an increase in intracellular calcium production and actin reorganization. In turn, recruitment of activated Th1 lymphocytes occurs at sites of inflammation. Activation of the CXCL10/CXCR3 axis also plays an important role in neurons in response to brain injury for activating microglia, the resident macrophage population of the central nervous system, and directing them to the lesion site. This recruitment is an essential element for neuronal reorganization. The chain is C-X-C motif chemokine 10 (CXCL10) from Canis lupus familiaris (Dog).